A 372-amino-acid chain; its full sequence is Citrate synthase 2 (372 aa).

Residue His-257 is part of the active site. Ser-284 bears the Phosphoserine mark. The active site involves Asp-308.

Belongs to the citrate synthase family. As to quaternary structure, homodimer.

The catalysed reaction is oxaloacetate + acetyl-CoA + H2O = citrate + CoA + H(+). It participates in carbohydrate metabolism; tricarboxylic acid cycle; isocitrate from oxaloacetate: step 1/2. In terms of biological role, might regulate the synthesis and function of enzymes involved in later enzymatic steps of Krebs cycle. Loss in activity results in sporulation defect. This is Citrate synthase 2 (citZ) from Bacillus subtilis (strain 168).